The primary structure comprises 157 residues: Transcription elongation factor GreA (157 aa).

The protein belongs to the GreA/GreB family.

In terms of biological role, necessary for efficient RNA polymerase transcription elongation past template-encoded arresting sites. The arresting sites in DNA have the property of trapping a certain fraction of elongating RNA polymerases that pass through, resulting in locked ternary complexes. Cleavage of the nascent transcript by cleavage factors such as GreA or GreB allows the resumption of elongation from the new 3'terminus. GreA releases sequences of 2 to 3 nucleotides. The polypeptide is Transcription elongation factor GreA (Mesorhizobium japonicum (strain LMG 29417 / CECT 9101 / MAFF 303099) (Mesorhizobium loti (strain MAFF 303099))).